Reading from the N-terminus, the 65-residue chain is Beta-mammal toxin Tpa2 (65 aa).

The LCN-type CS-alpha/beta domain occupies 2 to 64 (KEGYLVGNDG…TWSRATNRCG (63 aa)). 4 cysteine pairs are disulfide-bonded: Cys-12–Cys-63, Cys-16–Cys-38, Cys-24–Cys-44, and Cys-28–Cys-46.

As to expression, expressed by the venom gland.

The protein localises to the secreted. Beta toxins bind voltage-independently at site-4 of sodium channels (Nav) and shift the voltage of activation toward more negative potentials thereby affecting sodium channel activation and promoting spontaneous and repetitive firing. This toxin is lethal to mice. This is Beta-mammal toxin Tpa2 from Tityus pachyurus (Colombian scorpion).